The chain runs to 97 residues: Large ribosomal subunit protein eL21 (97 aa).

This sequence belongs to the eukaryotic ribosomal protein eL21 family.

The chain is Large ribosomal subunit protein eL21 (rpl21e) from Archaeoglobus fulgidus (strain ATCC 49558 / DSM 4304 / JCM 9628 / NBRC 100126 / VC-16).